The following is a 338-amino-acid chain: Bifunctional methylenetetrahydrofolate dehydrogenase/cyclohydrolase 2, mitochondrial (338 aa).

Residues 89–93 (YVRNK) and 136–138 (VQL) each bind substrate. NAD(+)-binding positions include 205–207 (GRS) and Arg238. Residue 314–318 (PGGVG) coordinates substrate.

Belongs to the tetrahydrofolate dehydrogenase/cyclohydrolase family. It depends on Mg(2+) as a cofactor. Widely expressed.

It is found in the mitochondrion inner membrane. The catalysed reaction is (6R)-5,10-methylene-5,6,7,8-tetrahydrofolate + NADP(+) = (6R)-5,10-methenyltetrahydrofolate + NADPH. It carries out the reaction (6R)-5,10-methylene-5,6,7,8-tetrahydrofolate + NAD(+) = (6R)-5,10-methenyltetrahydrofolate + NADH. The enzyme catalyses (6R)-5,10-methenyltetrahydrofolate + H2O = (6R)-10-formyltetrahydrofolate + H(+). The protein operates within one-carbon metabolism; tetrahydrofolate interconversion. Its function is as follows. Bifunctional mitochondrial folate-interconverting enzyme that has both NAD/NADP-dependent methylenetetrahydrofolate dehydrogenase and methenyltetrahydrofolate cyclohydrolase activities. In terms of biological role, has no NAD/NADP-dependent methylenetetrahydrofolate dehydrogenase activity. The chain is Bifunctional methylenetetrahydrofolate dehydrogenase/cyclohydrolase 2, mitochondrial from Rattus norvegicus (Rat).